The following is a 76-amino-acid chain: Beta-defensin 121 (76 aa).

The N-terminal stretch at 1–15 is a signal peptide; the sequence is MKLLLLLLTVTLLLA. 3 cysteine pairs are disulfide-bonded: Cys23-Cys50, Cys30-Cys44, and Cys34-Cys51.

This sequence belongs to the beta-defensin family.

The protein localises to the secreted. Functionally, has antibacterial activity. The sequence is that of Beta-defensin 121 (DEFB121) from Pan troglodytes (Chimpanzee).